We begin with the raw amino-acid sequence, 473 residues long: Reticulon-4 receptor (473 aa).

Positions 1–26 are cleaved as a signal peptide; that stretch reads MKRASSGGSRLLAWVLWLQAWRVATP. Intrachain disulfides connect C27-C33 and C31-C43. In terms of domain architecture, LRRNT spans 27–57; the sequence is CPGACVCYNEPKVTTSCPQQGLQAVPTGIPA. LRR repeat units lie at residues 56–79, 80–103, 105–128, 129–152, 153–176, 178–200, 202–224, 225–248, and 250–273; these read PASS…SFQS, CRNL…AFTG, TLLE…TFRG, LGHL…LFRG, LAAL…TFRD, GNLT…AFRG, HSLD…AFRD, LGRL…VLVP, and RSLQ…PLWA. N-linked (GlcNAc...) asparagine glycosylation occurs at N82. The 51-residue stretch at 260–310 folds into the LRRCT domain; it reads NPWVCDCRARPLWAWLQKFRGSSSEVPCNLPQRLAGRDLKRLAASDLEGCA. 3 disulfides stabilise this stretch: C264-C287, C266-C335, and C309-C336. Positions 346–446 are disordered; it reads VLEPGRPASA…GSSGTGDAEG (101 aa). N372 carries an N-linked (GlcNAc...) asparagine glycan. The span at 413 to 429 shows a compositional bias: basic residues; sequence PRRRPGCSRKNRTRSHC. The segment covering 434–445 has biased composition (gly residues); sequence AGSGSSGTGDAE. A lipid anchor (GPI-anchor amidated serine) is attached at S447. Positions 448-473 are cleaved as a propeptide — removed in mature form; that stretch reads GALPALACSLAPLGLALVLWTVLGPC.

It belongs to the Nogo receptor family. As to quaternary structure, homodimer. Interacts with MAG. Interacts with RTN4 and OMG. Interacts with LINGO1 and NGFR. Interacts with KIAA0319L. Interacts with OLFM1; this inhibits interaction with LINGO1 and NGFR. In terms of processing, N-glycosylated. O-glycosylated. Contains terminal sialic acid groups on its glycan chains. As to expression, detected in embryonic cerebellum, in spinal cord motor neurons and in dorsal root ganglia. Detected in adult brain, in neocortex, hippocampus, striatum, thalamus and dorsal root ganglion neurons (at protein level).

Its subcellular location is the cell membrane. The protein resides in the membrane raft. It is found in the cell projection. It localises to the dendrite. The protein localises to the perikaryon. Its subcellular location is the axon. Functionally, receptor for RTN4, OMG and MAG. Functions as a receptor for the sialylated gangliosides GT1b and GM1. Besides, functions as a receptor for chondroitin sulfate proteoglycans. Can also bind heparin. Intracellular signaling cascades are triggered via the coreceptor NGFR. Signaling mediates activation of Rho and downstream reorganization of the actin cytoskeleton. Mediates axonal growth inhibition. May play a role in regulating axon regeneration and neuronal plasticity in the adult central nervous system. Plays a role in postnatal brain development. Required for normal axon migration across the brain midline and normal formation of the corpus callosum. Protects motoneurons against apoptosis; protection against apoptosis is probably mediated via interaction with MAG. Acts in conjunction with RTN4 and LINGO1 in regulating neuronal precursor cell motility during cortical development. Like other family members, plays a role in restricting the number dendritic spines and the number of synapses that are formed during brain development. In Rattus norvegicus (Rat), this protein is Reticulon-4 receptor (Rtn4r).